A 504-amino-acid chain; its full sequence is Ammonium transporter 1 member 4 (504 aa).

12 consecutive transmembrane segments (helical) span residues 12–32 (LIPL…AEYI), 55–75 (LLFS…LCAG), 90–110 (VIDA…FAFG), 136–156 (YFLY…GSIA), 161–181 (FVAY…IVSH), 207–227 (FAGS…GALI), 251–271 (LVVL…PGSF), 292–314 (AVGR…TLFG), 318–338 (IDGY…FAAI), 344–364 (VVEP…LMGC), 377–397 (LEAA…TGLF), and 430–450 (VVQI…LFFI). The residue at position 471 (threonine 471) is a Phosphothreonine.

It belongs to the ammonia transporter channel (TC 1.A.11.2) family. In terms of tissue distribution, specifically expressed in pollen grains and tubes.

It is found in the cell membrane. In terms of biological role, high affinity ammonium transporter in the plasma membrane. This Arabidopsis thaliana (Mouse-ear cress) protein is Ammonium transporter 1 member 4 (AMT1-4).